The primary structure comprises 525 residues: GMP synthase [glutamine-hydrolyzing] (525 aa).

Residues 9-207 form the Glutamine amidotransferase type-1 domain; it reads RILILDFGSQ…VRDICQCEAL (199 aa). The Nucleophile role is filled by cysteine 86. Residues histidine 181 and glutamate 183 contribute to the active site. The 193-residue stretch at 208-400 folds into the GMPS ATP-PPase domain; it reads WTPAKIIDDA…LGLPYDMLYR (193 aa). 235–241 serves as a coordination point for ATP; it reads SGGVDSS.

In terms of assembly, homodimer.

It catalyses the reaction XMP + L-glutamine + ATP + H2O = GMP + L-glutamate + AMP + diphosphate + 2 H(+). Its pathway is purine metabolism; GMP biosynthesis; GMP from XMP (L-Gln route): step 1/1. In terms of biological role, catalyzes the synthesis of GMP from XMP. This is GMP synthase [glutamine-hydrolyzing] from Escherichia coli O17:K52:H18 (strain UMN026 / ExPEC).